Here is a 222-residue protein sequence, read N- to C-terminus: 7-carboxy-7-deazaguanine synthase (222 aa).

Substrate is bound by residues 16–18 (LQG) and R31. The Radical SAM core domain maps to 22-222 (NLGRPAVFVR…IMAWGNARGK (201 aa)). The [4Fe-4S] cluster site is built by C35, C39, and C42. T44 contacts Mg(2+). Residue T77 coordinates substrate. S-adenosyl-L-methionine contacts are provided by residues G79 and 126-128 (SPK).

It belongs to the radical SAM superfamily. 7-carboxy-7-deazaguanine synthase family. In terms of assembly, homodimer. Requires [4Fe-4S] cluster as cofactor. S-adenosyl-L-methionine serves as cofactor. The cofactor is Mg(2+).

It catalyses the reaction 6-carboxy-5,6,7,8-tetrahydropterin + H(+) = 7-carboxy-7-deazaguanine + NH4(+). It functions in the pathway purine metabolism; 7-cyano-7-deazaguanine biosynthesis. Functionally, catalyzes the complex heterocyclic radical-mediated conversion of 6-carboxy-5,6,7,8-tetrahydropterin (CPH4) to 7-carboxy-7-deazaguanine (CDG), a step common to the biosynthetic pathways of all 7-deazapurine-containing compounds. In Pyrobaculum aerophilum (strain ATCC 51768 / DSM 7523 / JCM 9630 / CIP 104966 / NBRC 100827 / IM2), this protein is 7-carboxy-7-deazaguanine synthase.